The chain runs to 566 residues: Osteoclast stimulatory transmembrane protein (566 aa).

Residues 1 to 51 lie on the Cytoplasmic side of the membrane; sequence MPGHPGAAEQLVKTGWRSWHLGFWKALAPLQAAWDAFSQPVPASCGQLLTQ. A helical transmembrane segment spans residues 52–72; it reads LLLCASLAAAAAGLVYHWLAS. Over 73 to 81 the chain is Extracellular; it reads LLLYPPGPS. A helical membrane pass occupies residues 82-102; sequence AMVATVCGLLVFLSLGLVPPV. Over 103 to 128 the chain is Cytoplasmic; that stretch reads RCLFALSVPTLGMEQGRRLLLSYSTA. Residues 129-149 form a helical membrane-spanning segment; sequence TLAIAVVPNVLANVGAAGQVL. At 150 to 227 the chain is on the extracellular side; the sequence is RCVTEGSLES…ARAAALGTQR (78 aa). The helical transmembrane segment at 228–248 threads the bilayer; sequence VVTGLFMLGLLVESAWYLHCY. The Cytoplasmic portion of the chain corresponds to 249 to 304; sequence LTDLRFDNIYATQQLTQRLAQAQATHLLAPPPTWLLQAAQLRLSQEELLSCLLRLG. The helical transmembrane segment at 305 to 325 threads the bilayer; that stretch reads LLALLLVATAVAVATDHVAFL. Topologically, residues 326-398 are extracellular; it reads LAQATVDWAQ…CPLLPARRPR (73 aa). The helical transmembrane segment at 399-419 threads the bilayer; that stretch reads AAAPLAAGALQLLAGSTVLLE. Over 420 to 566 the chain is Cytoplasmic; that stretch reads AYARRLRHAI…EGNTGHDRPG (147 aa).

It is found in the membrane. Its function is as follows. Probable cell surface receptor that plays a role in cellular fusion and cell differentiation. Cooperates with DCSTAMP in modulating cell-cell fusion in both osteoclasts and foreign body giant cells (FBGCs). Involved in osteoclast bone resorption. Promotes osteoclast differentiation and may play a role in the multinucleated osteoclast maturation. This is Osteoclast stimulatory transmembrane protein (OCSTAMP) from Homo sapiens (Human).